We begin with the raw amino-acid sequence, 194 residues long: Sigma factor AlgU negative regulatory protein (194 aa).

A helical membrane pass occupies residues 89 to 105 (LAVAASVTLAVLAGVRL).

Belongs to the RseA family.

It localises to the cell membrane. Functionally, negative regulator of the sigma factor AlgU. Plays a role in the differentiation of P.aeruginosa into the alginate-producing form. Inactivation of mucA causes a switch from the non-mucoid to mucoid state resulting in constitutive expression of alginate biosynthetic genes. This is Sigma factor AlgU negative regulatory protein (mucA) from Pseudomonas aeruginosa (strain ATCC 15692 / DSM 22644 / CIP 104116 / JCM 14847 / LMG 12228 / 1C / PRS 101 / PAO1).